A 320-amino-acid polypeptide reads, in one-letter code: GDSL esterase/lipase At3g43570 (320 aa).

Positions 1–19 (MKIQIIWLTLVLIVVEANA) are cleaved as a signal peptide. A glycan (N-linked (GlcNAc...) asparagine) is linked at Asn-25. The active-site Nucleophile is the Ser-37. N-linked (GlcNAc...) asparagine glycosylation occurs at Asn-287. Residues Asp-295 and His-298 contribute to the active site.

The protein belongs to the 'GDSL' lipolytic enzyme family.

The protein localises to the secreted. This Arabidopsis thaliana (Mouse-ear cress) protein is GDSL esterase/lipase At3g43570.